A 932-amino-acid chain; its full sequence is Calpain-like protease palB/cpr-8 (932 aa).

The region spanning Lys96–Pro419 is the Calpain catalytic domain. Residues Cys178, His346, and Asn366 contribute to the active site. The segment at Gln890–Asp932 is disordered. Residues Gly902 to Val911 show a composition bias toward gly residues.

Belongs to the peptidase C2 family. PalB/RIM13 subfamily.

In terms of biological role, required for the proteolytic cleavage of the transcription factor pacc-1 in response to alkaline ambient pH. The polypeptide is Calpain-like protease palB/cpr-8 (cpr-8) (Neurospora crassa (strain ATCC 24698 / 74-OR23-1A / CBS 708.71 / DSM 1257 / FGSC 987)).